The following is a 98-amino-acid chain: Protein S100-A11 (98 aa).

T5 is modified (phosphothreonine). EF-hand domains lie at 12 to 47 (LIAVFQKYSGKDGNSCHLSKTEFLSFMNTELAAFTK) and 50 to 85 (KDPGVLDRMMKKLDLNSDGQLDFQEFLNLIGGLAIA). N6-acetyllysine is present on K22. Positions 26, 28, 33, 63, 65, 67, 69, and 74 each coordinate Ca(2+).

Belongs to the S-100 family. As to quaternary structure, homodimer; disulfide-linked. Post-translationally, phosphorylation at Thr-5 significantly suppresses homodimerization and promotes association with NCL/nucleolin which induces nuclear translocation.

It localises to the cytoplasm. It is found in the nucleus. Facilitates the differentiation and the cornification of keratinocytes. In Rattus norvegicus (Rat), this protein is Protein S100-A11 (S100a11).